Here is a 236-residue protein sequence, read N- to C-terminus: MAKDTTGRMRVTVKSGGRMKLSSKLWLDRQLNDPYVAQAKRDGYRSRAAYKLTEIDDKYHFLKSGQAVVDLGAAPGGWSQVAAKRIGSANGRGKLIAIDLLEMGEIPGVTFAQLDFLDSAAPDKLREMLGGDGADVVMSDMAGNTTGHRKTDQLRIVGLVESAAQFASEVLKPGGIFVAKVFQSGADATLMNQLKRDFATVKHVKPAASRKDSSERYVLAMGFRGTQPAAQEPQEP.

Positions 76, 78, 99, 115, and 140 each coordinate S-adenosyl-L-methionine. The active-site Proton acceptor is lysine 180.

This sequence belongs to the class I-like SAM-binding methyltransferase superfamily. RNA methyltransferase RlmE family.

Its subcellular location is the cytoplasm. It carries out the reaction uridine(2552) in 23S rRNA + S-adenosyl-L-methionine = 2'-O-methyluridine(2552) in 23S rRNA + S-adenosyl-L-homocysteine + H(+). Its function is as follows. Specifically methylates the uridine in position 2552 of 23S rRNA at the 2'-O position of the ribose in the fully assembled 50S ribosomal subunit. The polypeptide is Ribosomal RNA large subunit methyltransferase E (Rhodopseudomonas palustris (strain HaA2)).